The following is a 191-amino-acid chain: Protein Ves (191 aa).

This sequence belongs to the Ves family.

The polypeptide is Protein Ves (Escherichia coli O8 (strain IAI1)).